Reading from the N-terminus, the 558-residue chain is Dimethylaniline monooxygenase [N-oxide-forming] 4 (558 aa).

Residues 9–13 (GAGVS), Glu32, and 40–41 (LW) each bind FAD. Residues 60-61 (TN) and 195-198 (TGGD) each bind NADP(+). The chain crosses the membrane as a helical span at residues 517–537 (AWGAPVLLASLLLICKSSLFL).

The protein belongs to the FMO family. The cofactor is FAD. In terms of tissue distribution, liver.

The protein resides in the microsome membrane. Its subcellular location is the endoplasmic reticulum membrane. The catalysed reaction is N,N-dimethylaniline + NADPH + O2 + H(+) = N,N-dimethylaniline N-oxide + NADP(+) + H2O. Functionally, this protein is involved in the oxidative metabolism of a variety of xenobiotics such as drugs and pesticides. The chain is Dimethylaniline monooxygenase [N-oxide-forming] 4 (FMO4) from Homo sapiens (Human).